An 840-amino-acid chain; its full sequence is Lysine-specific demethylase JMJ27 (840 aa).

Positions 1 to 10 (MEKMRGKRIR) are enriched in basic residues. Residues 1 to 52 (MEKMRGKRIRPRDSGELVEDGRSESERKTRKKENDVVSKGRIGRGRGRGEVS) are disordered. Residues 11–38 (PRDSGELVEDGRSESERKTRKKENDVVS) are compositionally biased toward basic and acidic residues. 8 residues coordinate Zn(2+): C80, C83, C95, C98, C104, C107, C124, and C127. The segment at 80–127 (CHHCKILTSESDLIFCSKCNKKCYCFDCIKRSYSERTHEEVRAACPFC) adopts an RING-type; degenerate zinc-finger fold. The 297-residue stretch at 502–798 (PKSGILNLAT…ECLRLTQEFR (297 aa)) folds into the JmjC domain. Fe cation is bound by residues H546 and D548. The segment at 594 to 678 (KEASELENKS…ETDGNTNERS (85 aa)) is disordered. Over residues 595-620 (EASELENKSMKEVDESKKDLKDKAAN) the composition is skewed to basic and acidic residues. The segment covering 621-631 (EEQSNNSSRPS) has biased composition (polar residues). Over residues 635–646 (EAEKVIISKEDN) the composition is skewed to basic and acidic residues. Residues 647 to 659 (PTQPAVSTSVESI) show a composition bias toward polar residues. The segment covering 660–678 (QEQKLDAPKETDGNTNERS) has biased composition (basic and acidic residues). Residue H766 participates in Fe cation binding.

The protein belongs to the JARID1 histone demethylase family. As to quaternary structure, interacts with RPN1A. Fe(2+) serves as cofactor. In terms of tissue distribution, expressed in seedlings, inflorescences, flowers and siliques, and, at low levels, in roots, leaves (including vascular bundles) and stems. Particularly observed in stomatal guard cells.

Its subcellular location is the nucleus. The protein localises to the cytoplasm. The catalysed reaction is N(6),N(6)-dimethyl-L-lysyl(9)-[histone H3] + 2-oxoglutarate + O2 = N(6)-methyl-L-lysyl(9)-[histone H3] + formaldehyde + succinate + CO2. It carries out the reaction N(6)-methyl-L-lysyl(9)-[histone H3] + 2-oxoglutarate + O2 = L-lysyl(9)-[histone H3] + formaldehyde + succinate + CO2. The enzyme catalyses N(6),N(6)-dimethyl-L-lysyl(9)-[histone H3] + 2 2-oxoglutarate + 2 O2 = L-lysyl(9)-[histone H3] + 2 formaldehyde + 2 succinate + 2 CO2. In terms of biological role, histone demethylase that demethylates 'Lys-9' (H3K9me) of histone H3 with a specific activity for H3K9me1 and H3K9me2. No activity on H3K4, H3K27, H3K36, H3R2 and H4R3 methyl marks, but weak activity on H3K9me3. Involved in regulation of gene expression. Regulates flowering time by repressing the major flowering regulator CONSTANS (CO) and promoting FLOWERING LOCUS C (FLC). Exhibits a positive impact on abscisic acid- (ABA), hydrogen peroxide- (H(2)O(2)) and calcium- (Ca(2+)) induced stomatal closure. Promotes stomatal-closure-dependent drought-stress responses through its histone demethylase activity toward at least GOLS2 and RD20 loci, thus protecting them from silencing by removing H3K9me2 marks in drought conditions. Required for plant defenses leading to resistance against the virulent bacterial pathogen Pseudomonas syringae pv. tomato DC3000 (Pst DC3000) via a negative regulation of WRKY25 (a repressor of defense) and by triggering the expression of several pathogenesis-related (PR) proteins (e.g. PR1, PR3, PR4 and PR5). This is Lysine-specific demethylase JMJ27 from Arabidopsis thaliana (Mouse-ear cress).